Reading from the N-terminus, the 131-residue chain is Small ribosomal subunit protein bS6 (131 aa).

The segment at 99-131 (ASPMVKAKDERRERREDFATETNEDSDAGDSEE) is disordered. Residues 104–116 (KAKDERRERREDF) are compositionally biased toward basic and acidic residues. Acidic residues predominate over residues 120 to 131 (TNEDSDAGDSEE).

This sequence belongs to the bacterial ribosomal protein bS6 family.

Binds together with bS18 to 16S ribosomal RNA. The polypeptide is Small ribosomal subunit protein bS6 (Sodalis glossinidius (strain morsitans)).